A 239-amino-acid chain; its full sequence is Ribonuclease HII (239 aa).

Residues 30 to 221 (GPVAGVDEVG…VRRLVTAGTP (192 aa)) form the RNase H type-2 domain. Residues Asp36, Glu37, and Asp130 each contribute to the a divalent metal cation site.

This sequence belongs to the RNase HII family. It depends on Mn(2+) as a cofactor. The cofactor is Mg(2+).

Its subcellular location is the cytoplasm. The catalysed reaction is Endonucleolytic cleavage to 5'-phosphomonoester.. Its function is as follows. Endonuclease that specifically degrades the RNA of RNA-DNA hybrids. The protein is Ribonuclease HII of Mycobacterium sp. (strain KMS).